An 85-amino-acid chain; its full sequence is Transcriptional repressor protein KorC (85 aa).

Positions 28–47 (VLHLAGLTGGQAARILGLGA) form a DNA-binding region, H-T-H motif.

Functionally, acts with KorA as corepressor in the control of the kilC and kilE operons. This chain is Transcriptional repressor protein KorC (korC), found in Escherichia coli.